Here is a 206-residue protein sequence, read N- to C-terminus: Large ribosomal subunit protein uL4 (206 aa).

Residues 51 to 96 (LTRAEVKHSTKKPFRQKGTGNARAGMTSTPNRRGGGRAFPNKPDEN) form a disordered region.

This sequence belongs to the universal ribosomal protein uL4 family. In terms of assembly, part of the 50S ribosomal subunit.

One of the primary rRNA binding proteins, this protein initially binds near the 5'-end of the 23S rRNA. It is important during the early stages of 50S assembly. It makes multiple contacts with different domains of the 23S rRNA in the assembled 50S subunit and ribosome. In terms of biological role, forms part of the polypeptide exit tunnel. In Chromobacterium violaceum (strain ATCC 12472 / DSM 30191 / JCM 1249 / CCUG 213 / NBRC 12614 / NCIMB 9131 / NCTC 9757 / MK), this protein is Large ribosomal subunit protein uL4.